Consider the following 453-residue polypeptide: Cytochrome b-c1 complex subunit 2, mitochondrial (453 aa).

The N-terminal 14 residues, 1-14, are a transit peptide targeting the mitochondrion; it reads MKLLTRAGSFSRFY. An N6-acetyllysine mark is found at lysine 66, lysine 199, and lysine 250.

Belongs to the peptidase M16 family. UQCRC2/QCR2 subfamily. In terms of assembly, component of the ubiquinol-cytochrome c oxidoreductase (cytochrome b-c1 complex, complex III, CIII), a multisubunit enzyme composed of 11 subunits. The complex is composed of 3 respiratory subunits cytochrome b, cytochrome c1 and Rieske protein UQCRFS1, 2 core protein subunits UQCRC1/QCR1 and UQCRC2/QCR2, and 6 low-molecular weight protein subunits UQCRH/QCR6, UQCRB/QCR7, UQCRQ/QCR8, UQCR10/QCR9, UQCR11/QCR10 and subunit 9, the cleavage product of Rieske protein UQCRFS1. The complex exists as an obligatory dimer and forms supercomplexes (SCs) in the inner mitochondrial membrane with NADH-ubiquinone oxidoreductase (complex I, CI) and cytochrome c oxidase (complex IV, CIV), resulting in different assemblies (supercomplex SCI(1)III(2)IV(1) and megacomplex MCI(2)III(2)IV(2)). Interacts with RAB5IF. Interacts with STMP1.

It localises to the mitochondrion inner membrane. Its function is as follows. Component of the ubiquinol-cytochrome c oxidoreductase, a multisubunit transmembrane complex that is part of the mitochondrial electron transport chain which drives oxidative phosphorylation. The respiratory chain contains 3 multisubunit complexes succinate dehydrogenase (complex II, CII), ubiquinol-cytochrome c oxidoreductase (cytochrome b-c1 complex, complex III, CIII) and cytochrome c oxidase (complex IV, CIV), that cooperate to transfer electrons derived from NADH and succinate to molecular oxygen, creating an electrochemical gradient over the inner membrane that drives transmembrane transport and the ATP synthase. The cytochrome b-c1 complex catalyzes electron transfer from ubiquinol to cytochrome c, linking this redox reaction to translocation of protons across the mitochondrial inner membrane, with protons being carried across the membrane as hydrogens on the quinol. In the process called Q cycle, 2 protons are consumed from the matrix, 4 protons are released into the intermembrane space and 2 electrons are passed to cytochrome c. The 2 core subunits UQCRC1/QCR1 and UQCRC2/QCR2 are homologous to the 2 mitochondrial-processing peptidase (MPP) subunits beta-MPP and alpha-MPP respectively, and they seem to have preserved their MPP processing properties. May be involved in the in situ processing of UQCRFS1 into the mature Rieske protein and its mitochondrial targeting sequence (MTS)/subunit 9 when incorporated into complex III. The polypeptide is Cytochrome b-c1 complex subunit 2, mitochondrial (UQCRC2) (Homo sapiens (Human)).